The sequence spans 605 residues: Apoptosis-inducing factor 3 (605 aa).

Residues 22 to 45 (KERGKEELSASGKGSPRAYQGNGT) are disordered. Positions 70–165 (AAVCHVKDLE…VKIEKEKVYV (96 aa)) constitute a Rieske domain. [2Fe-2S] cluster-binding residues include Cys109, His111, Cys128, and His131. Residues 201-205 (GAGAA), Arg235, Lys240, Val270, Asp467, and Trp514 each bind FAD.

This sequence belongs to the FAD-dependent oxidoreductase family. Ubiquitous. Expressed in bone marrow, cerebral cortex, liver, ovary, thymus, thyroid gland and tongue (at protein level).

It localises to the mitochondrion. Induces apoptosis through a caspase dependent pathway. Reduces mitochondrial membrane potential. In Homo sapiens (Human), this protein is Apoptosis-inducing factor 3 (AIFM3).